The chain runs to 317 residues: Melanocyte-stimulating hormone receptor (317 aa).

Topologically, residues 1-37 are extracellular; it reads MPVQGSQRRLLGSLNSTPTAPPHLGLAANQTGARCLE. Asn29 carries an N-linked (GlcNAc...) asparagine glycan. The helical transmembrane segment at 38 to 63 threads the bilayer; the sequence is VSIPDGLFLSLGLVSLVENVLVVTAI. Over 64-72 the chain is Cytoplasmic; sequence AKNRNLHSP. Residues 73–93 form a helical membrane-spanning segment; it reads MYCFICCLALSDLLVSGSNML. Residues 94–118 are Extracellular-facing; that stretch reads ETAVILLLEAGALAARAAVVQQLDN. Residues 119 to 140 traverse the membrane as a helical segment; sequence VIDVITCSSMLSSLCFLGAIAV. The Cytoplasmic portion of the chain corresponds to 141–163; it reads DRYISIFYALRYHSIVTLPRARR. Residues 164 to 183 traverse the membrane as a helical segment; the sequence is AVAAIWVASVLFSMLFIAYY. At 184-191 the chain is on the extracellular side; the sequence is DHAAVLLC. Residues 192-211 traverse the membrane as a helical segment; that stretch reads LVVFFLAMLVLMAVLYIHML. Residues 212–240 lie on the Cytoplasmic side of the membrane; that stretch reads VRACQHAQGIARLHKRQRPAHQGFGLKGA. A helical transmembrane segment spans residues 241–266; that stretch reads ATLTILLGIFFLCWGPFFLHLTLIVL. Residues 267 to 279 are Extracellular-facing; the sequence is CPQHPTCSCIFKN. Residues 280-300 form a helical membrane-spanning segment; sequence FNLFLALIICNAIIDPLIYAF. The Cytoplasmic portion of the chain corresponds to 301 to 317; that stretch reads RSQELRRTLKEVLLCSW. A lipid anchor (S-palmitoyl cysteine) is attached at Cys315.

Belongs to the G-protein coupled receptor 1 family. Interacts with MGRN1, but does not undergo MGRN1-mediated ubiquitination; this interaction competes with GNAS-binding and thus inhibits agonist-induced cAMP production. Interacts with OPN3; the interaction results in a decrease in MC1R-mediated cAMP signaling and ultimately a decrease in melanin production in melanocytes.

The protein resides in the cell membrane. Its function is as follows. Receptor for MSH (alpha, beta and gamma) and ACTH. The activity of this receptor is mediated by G proteins which activate adenylate cyclase. Mediates melanogenesis, the production of eumelanin (black/brown) and phaeomelanin (red/yellow), via regulation of cAMP signaling in melanocytes. This chain is Melanocyte-stimulating hormone receptor (MC1R), found in Cercopithecus diana (Diana monkey).